Here is a 392-residue protein sequence, read N- to C-terminus: Imidazolonepropionase (392 aa).

Fe(3+)-binding residues include His69 and His71. Residues His69 and His71 each coordinate Zn(2+). 4-imidazolone-5-propanoate-binding residues include Arg78, Tyr136, and His163. Tyr136 provides a ligand contact to N-formimidoyl-L-glutamate. A Fe(3+)-binding site is contributed by His226. His226 contributes to the Zn(2+) binding site. Residue Gln229 coordinates 4-imidazolone-5-propanoate. Position 302 (Asp302) interacts with Fe(3+). Position 302 (Asp302) interacts with Zn(2+). The N-formimidoyl-L-glutamate site is built by Asn304 and Gly306. 4-imidazolone-5-propanoate is bound at residue Ser307.

This sequence belongs to the metallo-dependent hydrolases superfamily. HutI family. The cofactor is Zn(2+). Fe(3+) serves as cofactor.

The protein localises to the cytoplasm. It carries out the reaction 4-imidazolone-5-propanoate + H2O = N-formimidoyl-L-glutamate. Its pathway is amino-acid degradation; L-histidine degradation into L-glutamate; N-formimidoyl-L-glutamate from L-histidine: step 3/3. Catalyzes the hydrolytic cleavage of the carbon-nitrogen bond in imidazolone-5-propanoate to yield N-formimidoyl-L-glutamate. It is the third step in the universal histidine degradation pathway. This is Imidazolonepropionase from Salinispora tropica (strain ATCC BAA-916 / DSM 44818 / JCM 13857 / NBRC 105044 / CNB-440).